Consider the following 956-residue polypeptide: Calsyntenin-3 (956 aa).

A signal peptide spans 1–20 (MARMSFLSFLLFCLTSVAHG). Over 21-850 (NKANKHKPWI…PHRNSVVPGA (830 aa)) the chain is Extracellular. Cadherin domains lie at 30 to 151 (IETE…SPVF) and 152 to 271 (VERR…IPLF). N-linked (GlcNAc...) asparagine glycans are attached at residues Asn-333, Asn-353, Asn-513, and Asn-743. The chain crosses the membrane as a helical span at residues 851 to 871 (ATVIIMVCVGFLVVMVILGVF). Topologically, residues 872–956 (RIRSIHRRGE…EGRDSAPRRY (85 aa)) are cytoplasmic. A compositionally biased stretch (acidic residues) spans 921–937 (GECEDEEEVVDSPDDTS). A disordered region spans residues 921-956 (GECEDEEEVVDSPDDTSDDQRIIIKKEGRDSAPRRY). Over residues 938 to 956 (DDQRIIIKKEGRDSAPRRY) the composition is skewed to basic and acidic residues.

It belongs to the calsyntenin family. In terms of assembly, homooligomer and heterooligomer; mediates both homophilic and heterophilc interactions with clstn1 and clstn2 paralogs via cadherin domains. Interacts (via cadherin domains) with both alpha and beta isoforms of neurexins. By 48 hours post-fertilization (hpf), widely expressed in the brain, with strong expression in the telencephalon and the midbrain. Not expressed in the optic tectum.

Its subcellular location is the postsynaptic cell membrane. It localises to the endoplasmic reticulum membrane. The protein resides in the golgi apparatus membrane. Its function is as follows. Synaptic adhesion molecule. Promotes synapse development by acting as a cell adhesion molecule at the postsynaptic membrane, which associates with presynaptic neurexins. The protein is Calsyntenin-3 of Danio rerio (Zebrafish).